Consider the following 453-residue polypeptide: MKLSLVVLTLISVAAQALALVARENLPKPQNDPFYQPPDGWESKKVGTILRSRKVNINTLVKDNLKEAWQLLYRTTYRSDDEPTTTVTTIMVPHNAQNDSLVMFGDFEDAGAPQCAPSYTWRAGLTSDVSSIFNVGIAMLYLQEGYIVTMPDKEGNKGAFGSGHVEGRQSLDGIRATLAFDKIGLNKNARVVGHGYSGGGIQCGWTAALKKSYAPEINSVGWYTGGTPSNLTALVERINGGPFAGYVAGGLGGVISTYPDVKAYTDKVFTKQAQKDLEFPQKHCQFEVVLRFPFKNFYDKSFSTVGKRFLYEPVVQKALNELTMGTNPEFTPDTPVLMAHGISDEIAPYEAAHKTYESWCKNGADVEFLSFVNPVSAHGVTTVTSSVPGFLWNRDRLQGKPVQNGCREIKNHDAGINSNALGEDFESALGLLKGLLGDKIGPNDEYLKDALHK.

The N-terminal stretch at methionine 1–alanine 19 is a signal peptide. A glycan (N-linked (GlcNAc...) asparagine) is linked at asparagine 98. Cysteine 115 and cysteine 284 form a disulfide bridge. Serine 197 (nucleophile) is an active-site residue. The N-linked (GlcNAc...) asparagine glycan is linked to asparagine 230. Active-site residues include aspartate 344 and histidine 378. Cysteines 360 and 406 form a disulfide.

This sequence belongs to the AB hydrolase superfamily. Lipase family. Class Lip subfamily.

It localises to the secreted. The catalysed reaction is a triacylglycerol + H2O = a diacylglycerol + a fatty acid + H(+). It carries out the reaction a monoacylglycerol + H2O = glycerol + a fatty acid + H(+). The enzyme catalyses a diacylglycerol + H2O = a monoacylglycerol + a fatty acid + H(+). Its activity is regulated as follows. The activity is significantly increased in the presence of Triton X-100 and partially inhibited by PMSF but unaffected by univalent and divalent metal ions. Activity is significantly decreased in acetate buffer compared to that in citrate buffer at the same pH. Functionally, major secreted lipase involved in Dandruff and seborrheic dermatitis (D/SD) probably via lipase-mediated breakdown of sebaceous lipids and release of irritating free fatty acids. Has triacylglycerol lipase activity and is able to hydrolyze triolein, tristearin, trilinolein, tripalmitoylglycerol and trihexadecenoin. Hydrolyze diacylglycerols such as distearin, dilinolein, dipalmitoylglycerol and dipalmitolein. Shows high esterase activity against 4-nitrophenyl palmitate and 1-naphthyl palmitate but not 1-naphthyl acetate, suggesting that it specifically recognizes fatty acids. Mostly converts monoolein to di- and triolein, while free fatty acids are only produced in low amounts. This is Secreted triacylglycerol lipase LIP2 from Malassezia globosa (strain ATCC MYA-4612 / CBS 7966) (Dandruff-associated fungus).